The chain runs to 256 residues: Protein FixA (256 aa).

It belongs to the ETF beta-subunit/FixA family. As to quaternary structure, heterodimer of FixA and FixB.

Its pathway is amine and polyamine metabolism; carnitine metabolism. Functionally, required for anaerobic carnitine reduction. May bring reductant to CaiA. The sequence is that of Protein FixA from Salmonella paratyphi A (strain ATCC 9150 / SARB42).